The chain runs to 394 residues: UDP-glucose 6-dehydrogenase (394 aa).

NAD(+) contacts are provided by residues Lys-2 to Leu-19, Val-11, Asp-29, Lys-34, Thr-83, Thr-118, and Glu-145. Substrate-binding positions include Glu-141–Glu-145, Lys-203, Asn-207, Tyr-248–Ser-252, and Gly-256. Tyr-258 lines the NAD(+) pocket. The active-site Nucleophile is the Cys-259. Lys-262 is a binding site for NAD(+). A substrate-binding site is contributed by Lys-313. Arg-320 serves as a coordination point for NAD(+).

The protein belongs to the UDP-glucose/GDP-mannose dehydrogenase family.

It carries out the reaction UDP-alpha-D-glucose + 2 NAD(+) + H2O = UDP-alpha-D-glucuronate + 2 NADH + 3 H(+). It participates in nucleotide-sugar biosynthesis; UDP-alpha-D-glucuronate biosynthesis; UDP-alpha-D-glucuronate from UDP-alpha-D-glucose: step 1/1. In terms of biological role, catalyzes the formation of UDP-glucuronic acid which is required for capsular hyaluronic acid synthesis. Directly responsible for the transformation of some unencapsulated serotype-3 SP mutants to the encapsulated phenotype. In Streptococcus pneumoniae, this protein is UDP-glucose 6-dehydrogenase (cap3A).